The chain runs to 103 residues: Putative truncated guanine nucleotide exchange factor YLL017W (103 aa).

Residues 26–97 enclose the SH3 domain; it reads QPIDVVECTY…PPSFYTVHSK (72 aa).

The chain is Putative truncated guanine nucleotide exchange factor YLL017W from Saccharomyces cerevisiae (strain ATCC 204508 / S288c) (Baker's yeast).